We begin with the raw amino-acid sequence, 267 residues long: Hydroxyethylthiazole kinase (267 aa).

Methionine 46 lines the substrate pocket. ATP-binding residues include arginine 122 and serine 168. Glycine 195 is a binding site for substrate.

It belongs to the Thz kinase family. Mg(2+) is required as a cofactor.

The enzyme catalyses 5-(2-hydroxyethyl)-4-methylthiazole + ATP = 4-methyl-5-(2-phosphooxyethyl)-thiazole + ADP + H(+). The protein operates within cofactor biosynthesis; thiamine diphosphate biosynthesis; 4-methyl-5-(2-phosphoethyl)-thiazole from 5-(2-hydroxyethyl)-4-methylthiazole: step 1/1. In terms of biological role, catalyzes the phosphorylation of the hydroxyl group of 4-methyl-5-beta-hydroxyethylthiazole (THZ). The polypeptide is Hydroxyethylthiazole kinase (Nitratidesulfovibrio vulgaris (strain ATCC 29579 / DSM 644 / CCUG 34227 / NCIMB 8303 / VKM B-1760 / Hildenborough) (Desulfovibrio vulgaris)).